The chain runs to 1218 residues: Protein jagged-1 (1218 aa).

The N-terminal stretch at 1–33 (MRSPRTRGRPGRPLSLLLALLCALRAKVCGASG) is a signal peptide. Residues 34 to 1067 (QFELEILSMQ…QRRPLKNRTD (1034 aa)) are Extracellular-facing. Residue Asn143 is glycosylated (N-linked (GlcNAc...) asparagine). In terms of domain architecture, DSL spans 185 to 229 (VTCDDHYYGFGCNKFCRPRDDFFGHYACDQNGNKTCMEGWMGPDC). 2 cysteine pairs are disulfide-bonded: Cys187–Cys196 and Cys200–Cys212. An important for interaction with NOTCH1 region spans residues 199–207 (FCRPRDDFF). A glycan (N-linked (GlcNAc...) asparagine) is linked at Asn217. 40 disulfides stabilise this stretch: Cys220–Cys229, Cys234–Cys245, Cys238–Cys251, Cys253–Cys262, Cys265–Cys276, Cys271–Cys282, Cys284–Cys293, Cys300–Cys312, Cys306–Cys322, Cys324–Cys333, Cys340–Cys351, Cys345–Cys360, Cys362–Cys371, Cys378–Cys389, Cys383–Cys398, Cys400–Cys409, Cys416–Cys427, Cys421–Cys436, Cys438–Cys447, Cys454–Cys464, Cys458–Cys473, Cys475–Cys484, Cys491–Cys502, Cys496–Cys511, Cys513–Cys522, Cys529–Cys540, Cys534–Cys549, Cys551–Cys560, Cys578–Cys605, Cys599–Cys615, Cys617–Cys626, Cys633–Cys644, Cys638–Cys653, Cys655–Cys664, Cys671–Cys682, Cys676–Cys691, Cys693–Cys702, Cys709–Cys720, Cys714–Cys729, and Cys731–Cys740. The 34-residue stretch at 230 to 263 (NKAICRQGCSPKHGSCKLPGDCRCQYGWQGLYCD) folds into the EGF-like 1 domain. The EGF-like 2; atypical domain occupies 264-294 (KCIPHPGCVHGTCNEPWQCLCETNWGGQLCD). EGF-like domains follow at residues 296 to 334 (DLNY…PNCE) and 336 to 372 (AEHA…PTCS). Positions 374–410 (NIDDCSPNNCSHGGTCQDLVNGFKCVCPPQWTGKTCQ) constitute an EGF-like 5; calcium-binding domain. Residue Asn382 is glycosylated (N-linked (GlcNAc...) asparagine). Residues 412 to 448 (DANECEAKPCVNARSCKNLIASYYCDCLPGWMGQNCD) enclose the EGF-like 6; calcium-binding domain. An EGF-like 7; calcium-binding domain is found at 450–485 (NINDCLGQCQNDASCRDLVNGYRCICPPGYAGDHCE). Positions 487–523 (DIDECASNPCLNGGHCQNEINRFQCLCPTGFSGNLCQ) constitute an EGF-like 8; calcium-binding domain. 2 EGF-like domains span residues 525–561 (DIDY…KNCS) and 586–627 (DTPE…TYCH). Asn559 carries N-linked (GlcNAc...) asparagine glycosylation. In terms of domain architecture, EGF-like 11; calcium-binding spans 629-665 (NINDCESNPCKNGGTCIDGVNSYKCICSDGWEGAHCE). An EGF-like 12; calcium-binding domain is found at 667-703 (NINDCSQNPCHYGGTCRDLVNDFYCDCKNGWKGKTCH). 2 EGF-like domains span residues 705-741 (RDSQ…TTCN) and 744-780 (RNSS…PICT). N-linked (GlcNAc...) asparagine glycosylation occurs at Asn745. Disulfide bonds link Cys748–Cys759, Cys753–Cys768, Cys770–Cys779, Cys786–Cys797, Cys791–Cys806, Cys808–Cys817, Cys824–Cys835, Cys829–Cys844, and Cys846–Cys855. One can recognise an EGF-like 15; calcium-binding domain in the interval 782-818 (NTNDCSPHPCYNSGTCVDGDNWYRCECAPGFAGPDCR). The 37-residue stretch at 820 to 856 (NINECQSSPCAFGATCVDEINGYQCICPPGHSGAKCH) folds into the EGF-like 16; calcium-binding domain. N-linked (GlcNAc...) asparagine glycosylation is found at Asn960, Asn991, Asn1045, and Asn1064. The chain crosses the membrane as a helical span at residues 1068 to 1093 (FLVPLLSSVLTVAWVCCLVTAFYWCV). The Cytoplasmic segment spans residues 1094–1218 (RKRRKPSSHT…QSLNRMEYIV (125 aa)). The segment at 1181–1218 (REEKAPSGTPTKHPNWTNKQDNRDLESAQSLNRMEYIV) is disordered. The segment covering 1188-1199 (GTPTKHPNWTNK) has biased composition (polar residues).

Interacts with NOTCH1, NOTCH2 and NOTCH3. Widely expressed in many tissues, with highest expression in brain, heart, muscle and thymus.

It localises to the membrane. The protein resides in the cell membrane. Functionally, ligand for multiple Notch receptors and involved in the mediation of Notch signaling. May be involved in cell-fate decisions during hematopoiesis. Seems to be involved in early and late stages of mammalian cardiovascular development. Inhibits myoblast differentiation. May regulate fibroblast growth factor-induced angiogenesis. The sequence is that of Protein jagged-1 (Jag1) from Mus musculus (Mouse).